The sequence spans 688 residues: NADPH-dependent diflavin oxidoreductase 1 (688 aa).

The interval 26–76 (HLHRHADTSPTNQHNTSHKMTTTEPIHVTTGSGESRDHTEPRHVTPTSPNA) is disordered. Positions 33 to 58 (TSPTNQHNTSHKMTTTEPIHVTTGSG) are enriched in polar residues. Positions 59-68 (ESRDHTEPRH) are enriched in basic and acidic residues. Residues 82–227 (ITIAYATETG…MYNEWQARFC (146 aa)) enclose the Flavodoxin-like domain. Residues 88–93 (TETGNA), 136–139 (STTG), 174–183 (LGDSSYPRFN), and Asp-209 each bind FMN. One can recognise an FAD-binding FR-type domain in the interval 277 to 543 (KDVLQGTVVG…KHSTPIPDLD (267 aa)). Residues Arg-453, 483–486 (RLFS), and 515–518 (GVLT) each bind FAD. Residues Thr-554, 607–608 (SR), and 613–617 (GGYVQ) contribute to the NADP(+) site. Trp-688 is a binding site for FAD.

This sequence belongs to the NADPH-dependent diflavin oxidoreductase NDOR1 family. The protein in the N-terminal section; belongs to the flavodoxin family. It in the C-terminal section; belongs to the flavoprotein pyridine nucleotide cytochrome reductase family. Interacts with DRE2; as part of the cytosolic iron-sulfur (Fe-S) protein assembly (CIA) machinery. Requires FAD as cofactor. FMN is required as a cofactor.

It localises to the cytoplasm. It is found in the mitochondrion. The enzyme catalyses 2 oxidized [2Fe-2S]-[protein] + NADPH = 2 reduced [2Fe-2S]-[protein] + NADP(+) + H(+). Functionally, NADPH-dependent reductase which is a central component of the cytosolic iron-sulfur (Fe-S) protein assembly (CIA) machinery. Transfers electrons from NADPH via its FAD and FMN prosthetic groups to the [2Fe-2S] cluster of DRE2, another key component of the CIA machinery. In turn, this reduced cluster provides electrons for assembly of cytosolic iron-sulfur cluster proteins. Positively controls H(2)O(2)-induced cell death. The sequence is that of NADPH-dependent diflavin oxidoreductase 1 from Yarrowia lipolytica (strain CLIB 122 / E 150) (Yeast).